A 181-amino-acid polypeptide reads, in one-letter code: Urease accessory protein UreE (181 aa).

The disordered stretch occupies residues Phe143–His181.

This sequence belongs to the UreE family.

Its subcellular location is the cytoplasm. Involved in urease metallocenter assembly. Binds nickel. Probably functions as a nickel donor during metallocenter assembly. The polypeptide is Urease accessory protein UreE (Marinobacter nauticus (strain ATCC 700491 / DSM 11845 / VT8) (Marinobacter aquaeolei)).